Here is a 521-residue protein sequence, read N- to C-terminus: Cytochrome P450 monooxygenase gloO (521 aa).

Positions 1–26 (MIAALFTTNLQLGAVGVFIFALLAFA) are cleaved as a signal peptide. A heme-binding site is contributed by C464.

The protein belongs to the cytochrome P450 family. Requires heme as cofactor.

It participates in mycotoxin biosynthesis. Functionally, cytochrome P450 monooxygenase; part of the gene cluster that mediates the biosynthesis of pneumocandins, lipohexapeptides of the echinocandin family that prevent fungal cell wall formation by non-competitive inhibition of beta-1,3-glucan synthase. The 10,12-dimethylmyristoyl side chain is synthesized by the reducing polyketide synthase gloL/GLPKS4. The thioesterase gloN/GLHYD exclusively interacts with gloL/GLPKS4 to maintain turnover of the polyketide side chain. The 10R,12S-dimethylmyristic acid is then transferred to the first thiolation domain of the nonribosomal peptide synthetase gloA/GLNRPS4 by the acyl-AMP ligase gloD/GLligase, followed by its acylation to L-ornithine to trigger elongation of the cyclic hexapeptide. L-ornithine, 4R-hydroxyl-L-proline (generated from L-proline by the dioxygenase gloF/GLOXY2), 3S-hydroxyl-L-homotyrosine (generated by gloG/GLHtyB, gloH/GLHtyA, gloI/GLHtyC, gloJ/GLHtyD and hydroxylated at C-3 by the dioxygenase gloM/GLOXY1), 3R-hydroxyl-L-glutamine (generated from L-glutamine probably by the dioxygenase gloE/GLOXY3) and 3S-hydroxyl-L-proline (generated from L-proline by the dioxygenase gloF/GLOXY2 to yield pneumocandin B0), or 3S-hydroxyl-4S-methyl-L-proline (generated from L-leucine by the dioxygenase gloC/GLOXY4 to yield pneumocandin A0) are sequentially added to the growing chain. The last C domain of gloA/GLNRPS4 is proposed to be responsible for cyclization by condensation to form the peptide bond between L-ornithine and 3S-hydroxyl-4S-methyl-L-proline (for pneumocandin A0) or 3S-hydroxyl-L-proline (for pneumocandin B0). Finally, the subsequent C-4 hydroxylation of 3S-hydroxyl-L-homotyrosine and L-ornithine dihydroxylation at C-4 and C-5 are performed by the cytochrome P450 monooxygenases gloP/GLP450-1 and gloO/GLP450-2, respectively. This chain is Cytochrome P450 monooxygenase gloO, found in Glarea lozoyensis (strain ATCC 20868 / MF5171).